A 273-amino-acid chain; its full sequence is Putative phosphoenolpyruvate synthase regulatory protein (273 aa).

153–160 (AVSRAGKT) lines the ADP pocket.

The protein belongs to the pyruvate, phosphate/water dikinase regulatory protein family. PSRP subfamily.

The catalysed reaction is [pyruvate, water dikinase] + ADP = [pyruvate, water dikinase]-phosphate + AMP + H(+). It carries out the reaction [pyruvate, water dikinase]-phosphate + phosphate + H(+) = [pyruvate, water dikinase] + diphosphate. In terms of biological role, bifunctional serine/threonine kinase and phosphorylase involved in the regulation of the phosphoenolpyruvate synthase (PEPS) by catalyzing its phosphorylation/dephosphorylation. This chain is Putative phosphoenolpyruvate synthase regulatory protein, found in Xanthomonas oryzae pv. oryzae (strain MAFF 311018).